The following is a 104-amino-acid chain: MSYAIFKHGGKQYKVVEGDIVLLDKMDKEPKALVELVEVLAVSKEGKLSFGKPFVNGAKIEAEVINEGRSKKVITFKKRRRKDSKTKRGFRRDFTRVRITKIVA.

It belongs to the bacterial ribosomal protein bL21 family. Part of the 50S ribosomal subunit. Contacts protein L20.

Its function is as follows. This protein binds to 23S rRNA in the presence of protein L20. The protein is Large ribosomal subunit protein bL21 of Helicobacter pylori (strain G27).